Consider the following 137-residue polypeptide: Small ribosomal subunit protein uS9 (137 aa).

The segment at 104 to 137 (PLKSEGYLTRDPRAKERKKYGLHKARKAPQYSKR) is disordered. A compositionally biased stretch (basic residues) spans 118-137 (KERKKYGLHKARKAPQYSKR).

It belongs to the universal ribosomal protein uS9 family.

The sequence is that of Small ribosomal subunit protein uS9 from Gloeothece citriformis (strain PCC 7424) (Cyanothece sp. (strain PCC 7424)).